The primary structure comprises 347 residues: 3-isopropylmalate dehydrogenase (347 aa).

NAD(+) is bound at residue 76–87; the sequence is GPKWTDPNNRPE. Residues Arg94, Arg104, Arg132, and Asp217 each contribute to the substrate site. Residues Asp217, Asp241, and Asp245 each coordinate Mg(2+). Residue 275-287 coordinates NAD(+); sequence GSAPDIANEDKAN.

The protein belongs to the isocitrate and isopropylmalate dehydrogenases family. LeuB type 1 subfamily. Homodimer. It depends on Mg(2+) as a cofactor. Requires Mn(2+) as cofactor.

It localises to the cytoplasm. It carries out the reaction (2R,3S)-3-isopropylmalate + NAD(+) = 4-methyl-2-oxopentanoate + CO2 + NADH. The protein operates within amino-acid biosynthesis; L-leucine biosynthesis; L-leucine from 3-methyl-2-oxobutanoate: step 3/4. Functionally, catalyzes the oxidation of 3-carboxy-2-hydroxy-4-methylpentanoate (3-isopropylmalate) to 3-carboxy-4-methyl-2-oxopentanoate. The product decarboxylates to 4-methyl-2 oxopentanoate. The sequence is that of 3-isopropylmalate dehydrogenase from Staphylococcus epidermidis (strain ATCC 12228 / FDA PCI 1200).